We begin with the raw amino-acid sequence, 958 residues long: Coiled-coil domain-containing protein 33 (958 aa).

Residues 214–353 form the C2 domain; the sequence is SPEEPLIASQ…LVKPTESGKA (140 aa). Polar residues predominate over residues 602-617; it reads SKDTVSSTMDLSTSTP. The segment at 602 to 628 is disordered; the sequence is SKDTVSSTMDLSTSTPREAEEEPLVPE. Coiled coils occupy residues 632–774 and 859–899; these read DTEM…LEDR and FNLL…RLQE. The interval 899–958 is disordered; the sequence is EQEKGFRHPSNSIIIEQPSALTHSMDLKQPSELEPLLPSSDSKLNKPLSPQKETANSQQT. Polar residues-rich tracts occupy residues 907–920 and 949–958; these read PSNS…SALT and QKETANSQQT.

The chain is Coiled-coil domain-containing protein 33 (CCDC33) from Homo sapiens (Human).